Here is a 218-residue protein sequence, read N- to C-terminus: 7-cyano-7-deazaguanine synthase 1 (218 aa).

An ATP-binding site is contributed by 9–19 (YSGGMDSFTVL). Zn(2+)-binding residues include Cys185, Cys193, Cys196, and Cys199.

It belongs to the QueC family. The cofactor is Zn(2+).

It carries out the reaction 7-carboxy-7-deazaguanine + NH4(+) + ATP = 7-cyano-7-deazaguanine + ADP + phosphate + H2O + H(+). It functions in the pathway purine metabolism; 7-cyano-7-deazaguanine biosynthesis. In terms of biological role, catalyzes the ATP-dependent conversion of 7-carboxy-7-deazaguanine (CDG) to 7-cyano-7-deazaguanine (preQ(0)). In Colwellia psychrerythraea (strain 34H / ATCC BAA-681) (Vibrio psychroerythus), this protein is 7-cyano-7-deazaguanine synthase 1.